The sequence spans 156 residues: Snaclec A14 (156 aa).

Positions M1–A23 are cleaved as a signal peptide. 3 cysteine pairs are disulfide-bonded: C27–C38, C55–C152, and C127–C144. A C-type lectin domain is found at Y34–K153. N141 is a glycosylation site (N-linked (GlcNAc...) asparagine).

Belongs to the snaclec family. Heterodimer; disulfide-linked. As to expression, expressed by the venom gland.

The protein localises to the secreted. Functionally, interferes with one step of hemostasis (modulation of platelet aggregation, or coagulation cascade, for example). The protein is Snaclec A14 of Macrovipera lebetinus (Levantine viper).